Here is a 941-residue protein sequence, read N- to C-terminus: Endoglucanase (941 aa).

A signal peptide spans 1-29 (MKIKQIKQSLSLLLIITLIMSLFVPMASA). 3 consecutive SLH domains span residues 37-94 (NAFP…GLEA), 95-158 (SSKD…LSLP), and 161-224 (QREY…DYLY). Glutamate 373 functions as the Proton donor in the catalytic mechanism. Glutamate 485 (nucleophile) is an active-site residue.

The protein belongs to the glycosyl hydrolase 5 (cellulase A) family.

It carries out the reaction Endohydrolysis of (1-&gt;4)-beta-D-glucosidic linkages in cellulose, lichenin and cereal beta-D-glucans.. The protein is Endoglucanase of Bacillus sp. (strain KSM-635).